The chain runs to 298 residues: Arginine/serine-rich protein 1 (298 aa).

The interval 1-135 (MSSAAMSKYV…SRSRSRGRSQ (135 aa)) is disordered. A Phosphoserine modification is found at serine 17. Residues 23–36 (SPSTSGSGRSSRLS) show a composition bias toward low complexity. Positions 60–105 (SRSHSRPRRSRRSRSRSRRRHQRKYRRYSRSYSRSRSRSRSHRYHR) are enriched in basic residues. A phosphoserine mark is found at serine 118 and serine 120. Positions 124 to 135 (SRSRSRSRGRSQ) are enriched in basic residues. Arginine 145 is subject to Omega-N-methylarginine. Disordered regions lie at residues 161–181 (RPRW…TPFR) and 218–298 (ASQG…WIPV). A compositionally biased stretch (polar residues) spans 219–228 (SQGTAVSSSG). Residues 230 to 246 (KVEHSEKQTEDATKNTS) show a composition bias toward basic and acidic residues. Residues 247–271 (EKSSTQRNIAFSSNNSVAKPLQKTT) show a composition bias toward polar residues. Basic and acidic residues predominate over residues 274–289 (AVEEKSSGSPKIDKKK). Serine 282 carries the post-translational modification Phosphoserine.

The protein belongs to the RSRP family. Phosphorylated. Phosphorylation at Ser-118 and Ser-120 mediates the interaction with spliceosome proteins.

It is found in the nucleus. In terms of biological role, probably acts as a spliceosomal factor that contributes to spliceosome assembly and regulates the isoform switching of proteins such as PARP6. The chain is Arginine/serine-rich protein 1 (Rsrp1) from Mus musculus (Mouse).